The primary structure comprises 101 residues: Small ribosomal subunit protein uS14 (101 aa).

The protein belongs to the universal ribosomal protein uS14 family. In terms of assembly, part of the 30S ribosomal subunit. Contacts proteins S3 and S10.

Its function is as follows. Binds 16S rRNA, required for the assembly of 30S particles and may also be responsible for determining the conformation of the 16S rRNA at the A site. This Salmonella schwarzengrund (strain CVM19633) protein is Small ribosomal subunit protein uS14.